Consider the following 149-residue polypeptide: Large ribosomal subunit protein uL13 (149 aa).

This sequence belongs to the universal ribosomal protein uL13 family. As to quaternary structure, part of the 50S ribosomal subunit.

In terms of biological role, this protein is one of the early assembly proteins of the 50S ribosomal subunit, although it is not seen to bind rRNA by itself. It is important during the early stages of 50S assembly. The chain is Large ribosomal subunit protein uL13 from Borrelia duttonii (strain Ly).